A 456-amino-acid polypeptide reads, in one-letter code: Bifunctional protein GlmU (456 aa).

A pyrophosphorylase region spans residues 1–229 (MSNSSMSVVI…LSEVEGVNNR (229 aa)). UDP-N-acetyl-alpha-D-glucosamine-binding positions include 11 to 14 (LAAG), K25, Q76, 81 to 82 (GT), 103 to 105 (YGD), G140, E154, N169, and N227. D105 lines the Mg(2+) pocket. Mg(2+) is bound at residue N227. Residues 230–250 (LQLSALERVFQTEQAEKLLLA) are linker. Positions 251–456 (GVMLLDPSRF…QGWKRPVKKK (206 aa)) are N-acetyltransferase. UDP-N-acetyl-alpha-D-glucosamine-binding residues include R333 and K351. H363 acts as the Proton acceptor in catalysis. 2 residues coordinate UDP-N-acetyl-alpha-D-glucosamine: Y366 and N377. Residues A380, 386-387 (NY), S405, A423, and R440 each bind acetyl-CoA.

This sequence in the N-terminal section; belongs to the N-acetylglucosamine-1-phosphate uridyltransferase family. In the C-terminal section; belongs to the transferase hexapeptide repeat family. As to quaternary structure, homotrimer. The cofactor is Mg(2+).

The protein resides in the cytoplasm. The enzyme catalyses alpha-D-glucosamine 1-phosphate + acetyl-CoA = N-acetyl-alpha-D-glucosamine 1-phosphate + CoA + H(+). The catalysed reaction is N-acetyl-alpha-D-glucosamine 1-phosphate + UTP + H(+) = UDP-N-acetyl-alpha-D-glucosamine + diphosphate. It functions in the pathway nucleotide-sugar biosynthesis; UDP-N-acetyl-alpha-D-glucosamine biosynthesis; N-acetyl-alpha-D-glucosamine 1-phosphate from alpha-D-glucosamine 6-phosphate (route II): step 2/2. The protein operates within nucleotide-sugar biosynthesis; UDP-N-acetyl-alpha-D-glucosamine biosynthesis; UDP-N-acetyl-alpha-D-glucosamine from N-acetyl-alpha-D-glucosamine 1-phosphate: step 1/1. It participates in bacterial outer membrane biogenesis; LPS lipid A biosynthesis. Catalyzes the last two sequential reactions in the de novo biosynthetic pathway for UDP-N-acetylglucosamine (UDP-GlcNAc). The C-terminal domain catalyzes the transfer of acetyl group from acetyl coenzyme A to glucosamine-1-phosphate (GlcN-1-P) to produce N-acetylglucosamine-1-phosphate (GlcNAc-1-P), which is converted into UDP-GlcNAc by the transfer of uridine 5-monophosphate (from uridine 5-triphosphate), a reaction catalyzed by the N-terminal domain. This Yersinia pseudotuberculosis serotype O:1b (strain IP 31758) protein is Bifunctional protein GlmU.